A 586-amino-acid chain; its full sequence is ATP-dependent lipid A-core flippase (586 aa).

Helical transmembrane passes span 25-45 (AYFIISFIGFGVFAAMEAQLI), 74-94 (LWFVPISVVVLSIIRGIGAYF), 163-183 (VAWFLAMMLIINWKLTLAFIC), and 264-284 (VLHIVLALALAVTFYLIMILW). Positions 28–317 (IISFIGFGVF…LTKINSIIQK (290 aa)) constitute an ABC transmembrane type-1 domain. In terms of domain architecture, ABC transporter spans 349-583 (VELKDVHFGY…SGVYANLYHS (235 aa)). Residue 382–389 (GSSGSGKS) participates in ATP binding.

The protein belongs to the ABC transporter superfamily. Lipid exporter (TC 3.A.1.106) family. In terms of assembly, homodimer.

The protein localises to the cell inner membrane. The enzyme catalyses ATP + H2O + lipid A-core oligosaccharideSide 1 = ADP + phosphate + lipid A-core oligosaccharideSide 2.. In terms of biological role, involved in lipopolysaccharide (LPS) biosynthesis. Translocates lipid A-core from the inner to the outer leaflet of the inner membrane. Transmembrane domains (TMD) form a pore in the inner membrane and the ATP-binding domain (NBD) is responsible for energy generation. The protein is ATP-dependent lipid A-core flippase of Saccharophagus degradans (strain 2-40 / ATCC 43961 / DSM 17024).